Consider the following 699-residue polypeptide: Endogenous retrovirus group K member 19 Env polyprotein (699 aa).

The disordered stretch occupies residues 1 to 47 (MNPSEMQRKAPPRRRRHRNRAPLTHKMNKMVTSEEQMKLPSTKKAEP). An N-terminal signal peptide occupies residues 1 to 89 (MNPSEMQRKA…ALMIVSMVVS (89 aa)). Positions 10 to 20 (APPRRRRHRNR) are enriched in basic residues. Residues 90 to 632 (LPMPAGAAAA…NLNPVTWVKT (543 aa)) lie on the Extracellular side of the membrane. Residues Asn-100, Asn-128, Asn-153, Asn-274, Asn-355, Asn-372, and Asn-461 are each glycosylated (N-linked (GlcNAc...) asparagine). Residues 466-486 (FIFTLIAVIMGLIAVTATAAV) are fusion peptide. Residues Asn-507, Asn-554, Asn-566, and Asn-585 are each glycosylated (N-linked (GlcNAc...) asparagine). The chain crosses the membrane as a helical span at residues 633–653 (IGSTTIINLILILVCLFCLLL). At 654-699 (VCRCTQQLRRDSDHRERAMMTMAVLSKRKGGNVGKSKRDQIVTVSV) the chain is on the cytoplasmic side.

It belongs to the beta type-B retroviral envelope protein family. HERV class-II K(HML-2) env subfamily. In terms of assembly, the surface (SU) and transmembrane (TM) proteins form a heterodimer. SU and TM are attached by noncovalent interactions or by a labile interchain disulfide bond. In terms of processing, specific enzymatic cleavages in vivo yield the mature SU and TM proteins.

It localises to the cell membrane. Its subcellular location is the virion. Its function is as follows. Retroviral envelope proteins mediate receptor recognition and membrane fusion during early infection. Endogenous envelope proteins may have kept, lost or modified their original function during evolution. This endogenous envelope protein has lost its original fusogenic properties. SU mediates receptor recognition. In terms of biological role, TM anchors the envelope heterodimer to the viral membrane through one transmembrane domain. The other hydrophobic domain, called fusion peptide, mediates fusion of the viral membrane with the target cell membrane. The polypeptide is Endogenous retrovirus group K member 19 Env polyprotein (ERVK-19) (Homo sapiens (Human)).